The following is a 795-amino-acid chain: Protein Jade-3 (795 aa).

Positions 1–25 (MKRLRTPSSSDSSDNESPSTSFSSN) are enriched in low complexity. The disordered stretch occupies residues 1-41 (MKRLRTPSSSDSSDNESPSTSFSSNKYGSKPGTPASAQKKP). The PHD-type 1 zinc-finger motif lies at 201–251 (DVICDVCRSPDSEEGNDMVFCDKCNICVHQACYGIVKVPDGNWLCRTCVLG). A C2HC pre-PHD-type zinc finger spans residues 253-287 (TPQCLLCPKTGGAMKATRAGTKWAHVSCALWIPEV). The segment at 311–367 (LICSLCKLKTGACIQCSVKNCTIPFHVTCAFEHSLEMKTILDEGDEVKFKSYCLKHS) adopts a PHD-type 2 zinc-finger fold. Disordered regions lie at residues 630 to 654 (HGQS…NGIL), 667 to 687 (AASE…SGFH), and 714 to 795 (FEKN…SVQR). 2 stretches are compositionally biased toward polar residues: residues 678-687 (SGKSQSSGFH) and 720-732 (KSSG…STER).

It belongs to the JADE family. In terms of assembly, component of the HBO1 complex.

Functionally, scaffold subunit of some HBO1 complexes, which have a histone H4 acetyltransferase activity. The chain is Protein Jade-3 (jade3) from Danio rerio (Zebrafish).